Consider the following 289-residue polypeptide: UDP-3-O-acyl-N-acetylglucosamine deacetylase (289 aa).

Zn(2+)-binding residues include His-79, His-236, and Asp-240. The active-site Proton donor is His-263.

The protein belongs to the LpxC family. Zn(2+) serves as cofactor.

The enzyme catalyses a UDP-3-O-[(3R)-3-hydroxyacyl]-N-acetyl-alpha-D-glucosamine + H2O = a UDP-3-O-[(3R)-3-hydroxyacyl]-alpha-D-glucosamine + acetate. Its pathway is glycolipid biosynthesis; lipid IV(A) biosynthesis; lipid IV(A) from (3R)-3-hydroxytetradecanoyl-[acyl-carrier-protein] and UDP-N-acetyl-alpha-D-glucosamine: step 2/6. Catalyzes the hydrolysis of UDP-3-O-myristoyl-N-acetylglucosamine to form UDP-3-O-myristoylglucosamine and acetate, the committed step in lipid A biosynthesis. The polypeptide is UDP-3-O-acyl-N-acetylglucosamine deacetylase (Rickettsia typhi (strain ATCC VR-144 / Wilmington)).